A 398-amino-acid chain; its full sequence is Galactose-3-O-sulfotransferase 2 (398 aa).

Residues 1-11 (MLSALGGLQRC) lie on the Cytoplasmic side of the membrane. A helical; Signal-anchor for type II membrane protein membrane pass occupies residues 12 to 29 (FWAILLLALTVSLLAGFL). At 30–398 (HKDVRLLMPL…PPKNIPFLGA (369 aa)) the chain is on the lumenal side. 6 N-linked (GlcNAc...) asparagine glycosylation sites follow: Asn-77, Asn-133, Asn-180, Asn-288, Asn-330, and Asn-360.

It belongs to the galactose-3-O-sulfotransferase family.

It is found in the golgi apparatus. It localises to the golgi stack membrane. It functions in the pathway protein modification; carbohydrate sulfation. With respect to regulation, strongly inhibited by Cu(2+) and Zn(2+). In terms of biological role, transfers a sulfate group to the hydroxyl group at C3 of non-reducing beta-galactosyl residues. Acts both on type 1 (Gal-beta-1,3-GlcNAc) and type 2 (Gal-beta-1,4-GlcNAc) chains with similar efficiency. This Sus scrofa (Pig) protein is Galactose-3-O-sulfotransferase 2 (GAL3ST2).